We begin with the raw amino-acid sequence, 554 residues long: MAAAPAALALDPQPQEEQKDASESSELSRLRAELAGALAEMETMKAVAEVSESTKAEAVAAVQRQCQEEVASLQAILKDSISSYETQIAALKQERQQQQQDSEEKERELGHLKQLLARAHPLDSLEKQMEKAHEDSEKLREIVLPMEQEIAELKVKLLRAEELIQEIQRRPRQPASLHGSTELLPLSRNPSPPLEPSEEPSGDAGPAAEAFAHNCDDSASISSFSLGGAAGSVSLRGPQGLSPEQEETASLVSTGTLVPEGIYLPPPGYQLVPDSQWEQLQVEGRQLQKELESVRRERDELQEGLSRSNEDCAKQMQVLLAQVQNSEQLLRTLQGTVSQAQERVQRQMAELATSHKCLSQEVKRLNEENRGLRAEQLPSSALQGSEQQEDQDEALPSSIQELHQLVRHTRQQARARQQAQEHEAERLRIEIVKLREALDEETAAKASLEGQLRVQREETDVLEASLCSLRIETERVQQEHHKAQLTDLLSEQRAKALRLQAELETSEQVQRDFVRLSQALQVRLEQIRQADTLEQVRSILDEAPLRDIKDIKDS.

Residues 1–15 (MAAAPAALALDPQPQ) show a composition bias toward low complexity. Disordered stretches follow at residues 1 to 29 (MAAA…ELSR), 167 to 250 (IQRR…ETAS), and 375 to 395 (EQLP…DEAL). Positions 15–173 (QEEQKDASES…IQEIQRRPRQ (159 aa)) form a coiled coil. Residues 16–29 (EEQKDASESSELSR) show a composition bias toward basic and acidic residues. Residues Ser176, Ser180, Ser187, and Ser191 each carry the phosphoserine modification. Positions 274–512 (DSQWEQLQVE…LETSEQVQRD (239 aa)) form a coiled coil. Residues 377–386 (LPSSALQGSE) show a composition bias toward polar residues.

Belongs to the rabaptin family. In terms of assembly, heterodimer with RABGEF1. The dimer binds RAB5A that has been activated by GTP-binding. Interacts with SDCCAG8; this interaction is important for ciliogenesis regulation. Interacts with RAB4A; this interaction may mediate VEGFR2 cell surface expression.

The protein localises to the cytoplasm. It is found in the early endosome. Its subcellular location is the cytoskeleton. The protein resides in the microtubule organizing center. It localises to the centrosome. The protein localises to the cilium basal body. Functionally, plays a role in membrane trafficking and in homotypic early endosome fusion. Participates in arteriogenesis by regulating vascular endothelial growth factor receptor 2/VEGFR2 cell surface expression and endosomal trafficking. By interacting with SDCCAG8, localizes to centrosomes and plays a critical role in ciliogenesis. The sequence is that of Rab GTPase-binding effector protein 2 (Rabep2) from Rattus norvegicus (Rat).